A 34-amino-acid chain; its full sequence is Dermaseptin-H5 (34 aa).

Expressed by the skin glands.

The protein resides in the secreted. Has antimicrobial activity. This chain is Dermaseptin-H5, found in Pithecopus hypochondrialis (Orange-legged leaf frog).